A 338-amino-acid chain; its full sequence is 1-aminocyclopropane-1-carboxylate deaminase (338 aa).

N6-(pyridoxal phosphate)lysine is present on K51. S78 acts as the Nucleophile in catalysis.

This sequence belongs to the ACC deaminase/D-cysteine desulfhydrase family. As to quaternary structure, homotrimer. The cofactor is pyridoxal 5'-phosphate.

The enzyme catalyses 1-aminocyclopropane-1-carboxylate + H2O = 2-oxobutanoate + NH4(+). Functionally, catalyzes a cyclopropane ring-opening reaction, the irreversible conversion of 1-aminocyclopropane-1-carboxylate (ACC) to ammonia and alpha-ketobutyrate. Allows growth on ACC as a nitrogen source. The chain is 1-aminocyclopropane-1-carboxylate deaminase from Burkholderia pseudomallei (strain 1106a).